Consider the following 745-residue polypeptide: Polyribonucleotide nucleotidyltransferase (745 aa).

Mg(2+)-binding residues include aspartate 487 and aspartate 493. Residues 554-613 (PSSTTVKIDKDKIKDIIGPGGKIIKEICETSNAKIDISDDGTVSIYASDRDKIKIALDKI) form the KH domain. The 69-residue stretch at 623-691 (GEIFNGTVMK…NKGKAKLTIK (69 aa)) folds into the S1 motif domain. The segment at 693-732 (AYKDHSSNNTKQKNNVKDDSESEQRRDTSKKRTWNEDNNT) is disordered. Basic and acidic residues predominate over residues 707 to 719 (NVKDDSESEQRRD).

This sequence belongs to the polyribonucleotide nucleotidyltransferase family. Mg(2+) is required as a cofactor.

It localises to the cytoplasm. It carries out the reaction RNA(n+1) + phosphate = RNA(n) + a ribonucleoside 5'-diphosphate. Involved in mRNA degradation. Catalyzes the phosphorolysis of single-stranded polyribonucleotides processively in the 3'- to 5'-direction. This chain is Polyribonucleotide nucleotidyltransferase, found in Rickettsia prowazekii (strain Madrid E).